Consider the following 238-residue polypeptide: Zinc import ATP-binding protein ZnuC (238 aa).

Residues 5–220 (VKLKNVCVNL…LEFISIFGLK (216 aa)) form the ABC transporter domain. 37-44 (GPNGAGKS) is an ATP binding site.

The protein belongs to the ABC transporter superfamily. Zinc importer (TC 3.A.1.15.5) family. In terms of assembly, the complex is composed of two ATP-binding proteins (ZnuC), two transmembrane proteins (ZnuB) and a solute-binding protein (ZnuA).

The protein resides in the cell inner membrane. The catalysed reaction is Zn(2+)(out) + ATP(in) + H2O(in) = Zn(2+)(in) + ADP(in) + phosphate(in) + H(+)(in). In terms of biological role, part of the ABC transporter complex ZnuABC involved in zinc import. Responsible for energy coupling to the transport system. The protein is Zinc import ATP-binding protein ZnuC of Buchnera aphidicola subsp. Acyrthosiphon pisum (strain APS) (Acyrthosiphon pisum symbiotic bacterium).